Here is a 595-residue protein sequence, read N- to C-terminus: GPI mannosyltransferase 3 (595 aa).

Transmembrane regions (helical) follow at residues 58-78 (YAFPMLFEMSYYVAWILGVAT), 85-105 (LAHATALCGAVVPSGAAGVAA), 128-148 (GPRVVMAAVAACGEFYSVLLV), 185-207 (FFATRTFINSFEMTLTAVALYHW), 212-232 (GLDVGSLGFSASLAVAAFACL), 235-255 (PTNVLIWAVLGLFLVLNLVRS), 260-280 (LLLTLVAKVAAAGALAVCANI), 289-309 (GVLLPLLRFIEFNVTTPLAAF), 319-339 (LLQSVPLIVGYALPFFVGALL), and 413-433 (VQSLLYVLPVLSITAALVLNT).

The protein belongs to the glycosyltransferase 22 family. PIGB subfamily.

Its subcellular location is the endoplasmic reticulum membrane. Its pathway is glycolipid biosynthesis; glycosylphosphatidylinositol-anchor biosynthesis. Its function is as follows. Mannosyltransferase involved in glycosylphosphatidylinositol-anchor biosynthesis. Transfers the third mannose to Man2-GlcN-acyl-PI during GPI precursor assembly. The polypeptide is GPI mannosyltransferase 3 (GPI10) (Eremothecium gossypii (strain ATCC 10895 / CBS 109.51 / FGSC 9923 / NRRL Y-1056) (Yeast)).